The sequence spans 267 residues: Ras-related protein Rab-36 (267 aa).

Residues Val68, Gly69, Lys70, Thr71, Ser72, Asp83, Tyr86, and Thr89 each coordinate GTP. Thr71 contacts Mg(2+). Positions 76–94 (RLCKNVFDHDYKATIGVDF) match the Switch 1 motif. Thr89 and Asp112 together coordinate Mg(2+). Positions 113-132 (TAGQEKFKCIASAYYRGAQV) match the Switch 2 motif. Residues Gly115, Lys172, Asp174, Ser203, Ala204, and Lys205 each contribute to the GTP site. Residues Cys266 and Cys267 are each lipidated (S-geranylgeranyl cysteine).

It belongs to the small GTPase superfamily. Rab family. Mg(2+) serves as cofactor.

The protein localises to the golgi apparatus membrane. It catalyses the reaction GTP + H2O = GDP + phosphate + H(+). Its activity is regulated as follows. Regulated by guanine nucleotide exchange factors (GEFs) which promote the exchange of bound GDP for free GTP. Regulated by GTPase activating proteins (GAPs) which increase the GTP hydrolysis activity. Inhibited by GDP dissociation inhibitors (GDIs). The small GTPases Rab are key regulators of intracellular membrane trafficking, from the formation of transport vesicles to their fusion with membranes. Rabs cycle between an inactive GDP-bound form and an active GTP-bound form that is able to recruit to membranes different sets of downstream effectors directly responsible for vesicle formation, movement, tethering and fusion. The sequence is that of Ras-related protein Rab-36 from Mus musculus (Mouse).